The sequence spans 351 residues: Photosystem II D2 protein (351 aa).

A helical transmembrane segment spans residues 39–59; it reads TAYLSIGGWLTGTTFVTSWYT. H116 provides a ligand contact to chlorophyll a. The helical transmembrane segment at 123–139 threads the bilayer; sequence GFMLRQFEIARLVGIRP. Q128 and N141 together coordinate pheophytin a. The chain crosses the membrane as a helical span at residues 151 to 164; that stretch reads VFVSVFLMYPLGQS. Position 196 (H196) interacts with chlorophyll a. A helical membrane pass occupies residues 206-226; it reads GALLCAIHGATVENTLFEDGE. Positions 213 and 260 each coordinate a plastoquinone. Fe cation is bound at residue H213. Residue H267 coordinates Fe cation. Residues 277–293 traverse the membrane as a helical segment; sequence GLWTSAIGIIGLALNLR.

Belongs to the reaction center PufL/M/PsbA/D family. As to quaternary structure, PSII is composed of 1 copy each of membrane proteins PsbA, PsbB, PsbC, PsbD, PsbE, PsbF, PsbH, PsbI, PsbJ, PsbK, PsbL, PsbM, PsbT, PsbX, PsbY, PsbZ, Psb30/Ycf12, peripheral proteins PsbO, CyanoQ (PsbQ), PsbU, PsbV and a large number of cofactors. It forms dimeric complexes. Requires The D1/D2 heterodimer binds P680, chlorophylls that are the primary electron donor of PSII, and subsequent electron acceptors. It shares a non-heme iron and each subunit binds pheophytin, quinone, additional chlorophylls, carotenoids and lipids. There is also a Cl(-1) ion associated with D1 and D2, which is required for oxygen evolution. The PSII complex binds additional chlorophylls, carotenoids and specific lipids. as cofactor.

The protein resides in the cellular thylakoid membrane. It carries out the reaction 2 a plastoquinone + 4 hnu + 2 H2O = 2 a plastoquinol + O2. Functionally, photosystem II (PSII) is a light-driven water:plastoquinone oxidoreductase that uses light energy to abstract electrons from H(2)O, generating O(2) and a proton gradient subsequently used for ATP formation. It consists of a core antenna complex that captures photons, and an electron transfer chain that converts photonic excitation into a charge separation. The D1/D2 (PsbA/PsbD) reaction center heterodimer binds P680, the primary electron donor of PSII as well as several subsequent electron acceptors. D2 is needed for assembly of a stable PSII complex. The sequence is that of Photosystem II D2 protein from Synechococcus sp. (strain CC9311).